A 145-amino-acid polypeptide reads, in one-letter code: Cell wall teichoic acid glycosylation protein GtcA (145 aa).

4 helical membrane-spanning segments follow: residues 21–41 (IFMY…TFWL), 45–65 (ILNW…VLFA), 91–111 (FFGF…LLIS), and 122–142 (IWTN…IIFK).

This sequence belongs to the GtrA family.

The protein localises to the cell membrane. In terms of biological role, involved in the decoration of cell wall teichoic acid with galactose and glucose. In Listeria monocytogenes, this protein is Cell wall teichoic acid glycosylation protein GtcA (gtcA).